The following is a 196-amino-acid chain: Probable malonic semialdehyde reductase RutE (196 aa).

Belongs to the nitroreductase family. HadB/RutE subfamily. It depends on FMN as a cofactor.

The catalysed reaction is 3-hydroxypropanoate + NADP(+) = 3-oxopropanoate + NADPH + H(+). Its function is as follows. May reduce toxic product malonic semialdehyde to 3-hydroxypropionic acid, which is excreted. The polypeptide is Probable malonic semialdehyde reductase RutE (Cronobacter sakazakii (strain ATCC BAA-894) (Enterobacter sakazakii)).